The sequence spans 425 residues: Elongation factor 1-alpha (425 aa).

The tr-type G domain occupies 5-221 (KPHMNLAVIG…NALSEPEKPT (217 aa)). The segment at 14–21 (GHIDHGKS) is G1. 14 to 21 (GHIDHGKS) serves as a coordination point for GTP. Ser21 provides a ligand contact to Mg(2+). A G2 region spans residues 70–74 (GITID). The G3 stretch occupies residues 91–94 (DCPG). GTP-binding positions include 91–95 (DCPGH) and 146–149 (NKMD). Residues 146-149 (NKMD) are G4. Positions 185–187 (SAF) are G5.

This sequence belongs to the TRAFAC class translation factor GTPase superfamily. Classic translation factor GTPase family. EF-Tu/EF-1A subfamily.

The protein resides in the cytoplasm. It catalyses the reaction GTP + H2O = GDP + phosphate + H(+). Functionally, GTP hydrolase that promotes the GTP-dependent binding of aminoacyl-tRNA to the A-site of ribosomes during protein biosynthesis. This chain is Elongation factor 1-alpha, found in Methanoculleus marisnigri (strain ATCC 35101 / DSM 1498 / JR1).